We begin with the raw amino-acid sequence, 299 residues long: MLDNTRLRIAIQKSGRLSDDSRELLARCGIKINLHTQRLIAMAENMPIDILRVRDDDIPGLVMDGVVDLGIIGENVLEEELLNRRAQGEDPRYLTLRRLDFGGCRLSLATPVDEAWDGPAALDGKRIATSYPHLLKRYLDQKGVSFKSCLLNGSVEVAPRAGLADAICDLVSTGATLEANGLREVEVIYRSKACLIQRDGEMAQSKQQLIDKLLTRIQGVIQARESKYIMMHAPSERLEEVIALLPGAERPTILPLAGEQQRVAMHMVSSETLFWETMEKLKALGASSILVLPIEKMME.

It belongs to the ATP phosphoribosyltransferase family. Long subfamily. In terms of assembly, equilibrium between an active dimeric form, an inactive hexameric form and higher aggregates. Interconversion between the various forms is largely reversible and is influenced by the natural substrates and inhibitors of the enzyme. It depends on Mg(2+) as a cofactor.

Its subcellular location is the cytoplasm. The enzyme catalyses 1-(5-phospho-beta-D-ribosyl)-ATP + diphosphate = 5-phospho-alpha-D-ribose 1-diphosphate + ATP. It functions in the pathway amino-acid biosynthesis; L-histidine biosynthesis; L-histidine from 5-phospho-alpha-D-ribose 1-diphosphate: step 1/9. Its activity is regulated as follows. Feedback inhibited by histidine. Functionally, catalyzes the condensation of ATP and 5-phosphoribose 1-diphosphate to form N'-(5'-phosphoribosyl)-ATP (PR-ATP). Has a crucial role in the pathway because the rate of histidine biosynthesis seems to be controlled primarily by regulation of HisG enzymatic activity. The sequence is that of ATP phosphoribosyltransferase from Salmonella dublin (strain CT_02021853).